A 182-amino-acid chain; its full sequence is Ribosome maturation factor RimM (182 aa).

The 80-residue stretch at 103 to 182 folds into the PRC barrel domain; that stretch reads EDEFYWRELF…RIEVDWDPGF (80 aa).

This sequence belongs to the RimM family. As to quaternary structure, binds ribosomal protein uS19.

Its subcellular location is the cytoplasm. An accessory protein needed during the final step in the assembly of 30S ribosomal subunit, possibly for assembly of the head region. Essential for efficient processing of 16S rRNA. May be needed both before and after RbfA during the maturation of 16S rRNA. It has affinity for free ribosomal 30S subunits but not for 70S ribosomes. In Vibrio vulnificus (strain CMCP6), this protein is Ribosome maturation factor RimM.